Here is a 248-residue protein sequence, read N- to C-terminus: 3-deoxy-manno-octulosonate cytidylyltransferase (248 aa).

Belongs to the KdsB family.

Its subcellular location is the cytoplasm. The catalysed reaction is 3-deoxy-alpha-D-manno-oct-2-ulosonate + CTP = CMP-3-deoxy-beta-D-manno-octulosonate + diphosphate. Its pathway is nucleotide-sugar biosynthesis; CMP-3-deoxy-D-manno-octulosonate biosynthesis; CMP-3-deoxy-D-manno-octulosonate from 3-deoxy-D-manno-octulosonate and CTP: step 1/1. It participates in bacterial outer membrane biogenesis; lipopolysaccharide biosynthesis. Its function is as follows. Activates KDO (a required 8-carbon sugar) for incorporation into bacterial lipopolysaccharide in Gram-negative bacteria. This is 3-deoxy-manno-octulosonate cytidylyltransferase from Salmonella typhi.